The primary structure comprises 570 residues: Zeta-carotene desaturase, chloroplastic/chromoplastic (570 aa).

Low complexity predominate over residues 1–16 (MASVAATTTLAPALAP). The interval 1-33 (MASVAATTTLAPALAPRRARPGTGLVPPRRASA) is disordered.

This sequence belongs to the zeta carotene desaturase family. The cofactor is NAD(+). NADP(+) serves as cofactor. FAD is required as a cofactor.

Its subcellular location is the plastid. The protein resides in the chloroplast. It localises to the chromoplast. The enzyme catalyses 9,9'-di-cis-zeta-carotene + 2 a quinone = 7,7',9,9'-tetra-cis-lycopene + 2 a quinol. The protein operates within carotenoid biosynthesis; lycopene biosynthesis. Catalyzes the conversion of zeta-carotene to lycopene via the intermediary of neurosporene. It carries out two consecutive desaturations (introduction of double bonds) at positions C-7 and C-7'. The protein is Zeta-carotene desaturase, chloroplastic/chromoplastic (ZDS1) of Zea mays (Maize).